Here is a 393-residue protein sequence, read N- to C-terminus: tRNA(Met) cytidine acetate ligase (393 aa).

Residues G81, N142, and R167 each contribute to the ATP site.

It belongs to the TmcAL family.

It localises to the cytoplasm. It carries out the reaction cytidine(34) in elongator tRNA(Met) + acetate + ATP = N(4)-acetylcytidine(34) in elongator tRNA(Met) + AMP + diphosphate. Functionally, catalyzes the formation of N(4)-acetylcytidine (ac(4)C) at the wobble position of elongator tRNA(Met), using acetate and ATP as substrates. First activates an acetate ion to form acetyladenylate (Ac-AMP) and then transfers the acetyl group to tRNA to form ac(4)C34. The polypeptide is tRNA(Met) cytidine acetate ligase (Bacillus cereus (strain ATCC 14579 / DSM 31 / CCUG 7414 / JCM 2152 / NBRC 15305 / NCIMB 9373 / NCTC 2599 / NRRL B-3711)).